We begin with the raw amino-acid sequence, 243 residues long: tRNA (guanine-N(1)-)-methyltransferase (243 aa).

S-adenosyl-L-methionine-binding positions include Gly-123 and 143–148; that span reads LGDFVM.

It belongs to the RNA methyltransferase TrmD family. Homodimer.

It localises to the cytoplasm. The enzyme catalyses guanosine(37) in tRNA + S-adenosyl-L-methionine = N(1)-methylguanosine(37) in tRNA + S-adenosyl-L-homocysteine + H(+). Functionally, specifically methylates guanosine-37 in various tRNAs. The chain is tRNA (guanine-N(1)-)-methyltransferase from Ruegeria pomeroyi (strain ATCC 700808 / DSM 15171 / DSS-3) (Silicibacter pomeroyi).